The sequence spans 220 residues: Deoxyribose-phosphate aldolase (220 aa).

Asp89 functions as the Proton donor/acceptor in the catalytic mechanism. The active-site Schiff-base intermediate with acetaldehyde is the Lys151. Lys180 acts as the Proton donor/acceptor in catalysis.

Belongs to the DeoC/FbaB aldolase family. DeoC type 1 subfamily.

The protein resides in the cytoplasm. The catalysed reaction is 2-deoxy-D-ribose 5-phosphate = D-glyceraldehyde 3-phosphate + acetaldehyde. It functions in the pathway carbohydrate degradation; 2-deoxy-D-ribose 1-phosphate degradation; D-glyceraldehyde 3-phosphate and acetaldehyde from 2-deoxy-alpha-D-ribose 1-phosphate: step 2/2. In terms of biological role, catalyzes a reversible aldol reaction between acetaldehyde and D-glyceraldehyde 3-phosphate to generate 2-deoxy-D-ribose 5-phosphate. The polypeptide is Deoxyribose-phosphate aldolase (Streptococcus uberis (strain ATCC BAA-854 / 0140J)).